The primary structure comprises 255 residues: Trans-aconitate 2-methyltransferase (255 aa).

Belongs to the methyltransferase superfamily. Tam family.

It is found in the cytoplasm. It catalyses the reaction trans-aconitate + S-adenosyl-L-methionine = (E)-3-(methoxycarbonyl)pent-2-enedioate + S-adenosyl-L-homocysteine. Its function is as follows. Catalyzes the S-adenosylmethionine monomethyl esterification of trans-aconitate. The sequence is that of Trans-aconitate 2-methyltransferase from Mycolicibacterium gilvum (strain PYR-GCK) (Mycobacterium gilvum (strain PYR-GCK)).